We begin with the raw amino-acid sequence, 197 residues long: DNA-directed RNA polymerases I, II, and III subunit rpabc1 (197 aa).

The protein belongs to the archaeal Rpo5/eukaryotic RPB5 RNA polymerase subunit family. As to quaternary structure, component of the RNA polymerase I (Pol I), RNA polymerase II (Pol II) and RNA polymerase III (Pol III) complexes consisting of at least 13, 12 and 17 subunits, respectively. In RNA Pol II, this subunit is present in 2-fold molar excess over the other subunits.

It is found in the nucleus. Its function is as follows. DNA-dependent RNA polymerase catalyzes the transcription of DNA into RNA using the four ribonucleoside triphosphates as substrates. Common component of RNA polymerases I, II and III which synthesize ribosomal RNA precursors, mRNA precursors and many functional non-coding RNAs, and small RNAs, such as 5S rRNA and tRNAs, respectively. Pol II is the central component of the basal RNA polymerase II transcription machinery. Pols are composed of mobile elements that move relative to each other. In Pol II, RPB5 is part of the lower jaw surrounding the central large cleft and thought to grab the incoming DNA template. Seems to be the major component in this process. This is DNA-directed RNA polymerases I, II, and III subunit rpabc1 (polr2e) from Dictyostelium discoideum (Social amoeba).